The sequence spans 273 residues: Dermonecrotic toxin LapSicTox-alphaIB1aii (273 aa).

His5 is an active-site residue. Mg(2+) is bound by residues Glu25 and Asp27. The Nucleophile role is filled by His41. 2 disulfide bridges follow: Cys45-Cys51 and Cys47-Cys190. Asp85 serves as a coordination point for Mg(2+). N-linked (GlcNAc...) asparagine glycosylation is present at Asn250.

Belongs to the arthropod phospholipase D family. Class II subfamily. Mg(2+) is required as a cofactor. Expressed by the venom gland.

The protein localises to the secreted. The enzyme catalyses an N-(acyl)-sphingosylphosphocholine = an N-(acyl)-sphingosyl-1,3-cyclic phosphate + choline. The catalysed reaction is an N-(acyl)-sphingosylphosphoethanolamine = an N-(acyl)-sphingosyl-1,3-cyclic phosphate + ethanolamine. It catalyses the reaction a 1-acyl-sn-glycero-3-phosphocholine = a 1-acyl-sn-glycero-2,3-cyclic phosphate + choline. It carries out the reaction a 1-acyl-sn-glycero-3-phosphoethanolamine = a 1-acyl-sn-glycero-2,3-cyclic phosphate + ethanolamine. In terms of biological role, dermonecrotic toxins cleave the phosphodiester linkage between the phosphate and headgroup of certain phospholipids (sphingolipid and lysolipid substrates), forming an alcohol (often choline) and a cyclic phosphate. This toxin acts on sphingomyelin (SM). It may also act on ceramide phosphoethanolamine (CPE), lysophosphatidylcholine (LPC) and lysophosphatidylethanolamine (LPE), but not on lysophosphatidylserine (LPS), and lysophosphatidylglycerol (LPG). It acts by transphosphatidylation, releasing exclusively cyclic phosphate products as second products. Induces dermonecrosis, hemolysis, increased vascular permeability, edema, inflammatory response, and platelet aggregation. In Loxosceles apachea (Apache recluse spider), this protein is Dermonecrotic toxin LapSicTox-alphaIB1aii.